The primary structure comprises 1372 residues: DNA-directed RNA polymerase subunit beta' (1372 aa).

Positions 69, 71, 84, and 87 each coordinate Zn(2+). The Mg(2+) site is built by Asp-460, Asp-462, and Asp-464. The Zn(2+) site is built by Cys-808, Cys-882, Cys-889, and Cys-892.

The protein belongs to the RNA polymerase beta' chain family. As to quaternary structure, the RNAP catalytic core consists of 2 alpha, 1 beta, 1 beta' and 1 omega subunit. When a sigma factor is associated with the core the holoenzyme is formed, which can initiate transcription. The cofactor is Mg(2+). It depends on Zn(2+) as a cofactor.

The catalysed reaction is RNA(n) + a ribonucleoside 5'-triphosphate = RNA(n+1) + diphosphate. Functionally, DNA-dependent RNA polymerase catalyzes the transcription of DNA into RNA using the four ribonucleoside triphosphates as substrates. The protein is DNA-directed RNA polymerase subunit beta' of Rickettsia rickettsii (strain Iowa).